The sequence spans 96 residues: Protein RnfH (96 aa).

It belongs to the UPF0125 (RnfH) family.

The chain is Protein RnfH from Psychromonas ingrahamii (strain DSM 17664 / CCUG 51855 / 37).